Reading from the N-terminus, the 270-residue chain is Sugar phosphatase YidA (270 aa).

The active-site Nucleophile is the Asp9. Residue Asp9 participates in Mg(2+) binding. Met10 lines the phosphate pocket. Residue Asp11 participates in Mg(2+) binding. Residues 43-44 (TG) and Lys197 each bind phosphate. Asp220 contributes to the Mg(2+) binding site. Asn223 is a binding site for phosphate.

Belongs to the HAD-like hydrolase superfamily. Cof family. In terms of assembly, homodimer. It depends on Mg(2+) as a cofactor.

It carries out the reaction sugar phosphate + H2O = sugar + phosphate.. In terms of biological role, catalyzes the dephosphorylation of different sugar phosphates. The polypeptide is Sugar phosphatase YidA (yidA) (Escherichia coli O6:H1 (strain CFT073 / ATCC 700928 / UPEC)).